Consider the following 85-residue polypeptide: MAHKKAAGSSRNGRDSESKRLGVKLFGGQAATAGNIIVRQRGTKFHAGSGVGIGKDHTLFALNDGVIKFETKGPKNRKFVSVVSA.

The segment at 1 to 21 (MAHKKAAGSSRNGRDSESKRL) is disordered.

It belongs to the bacterial ribosomal protein bL27 family.

The sequence is that of Large ribosomal subunit protein bL27 from Chromohalobacter salexigens (strain ATCC BAA-138 / DSM 3043 / CIP 106854 / NCIMB 13768 / 1H11).